A 183-amino-acid chain; its full sequence is Translocon-associated protein subunit beta (183 aa).

Positions methionine 1–alanine 17 are cleaved as a signal peptide. Residues glutamate 18–aspartate 149 are Lumenal-facing. Asparagine 88 and asparagine 104 each carry an N-linked (GlcNAc...) asparagine glycan. A helical transmembrane segment spans residues tryptophan 150 to tyrosine 169. At serine 170–asparagine 183 the chain is on the cytoplasmic side.

It belongs to the TRAP-beta family. In terms of assembly, heterotetramer of TRAP-alpha, TRAP-beta, TRAP-delta and TRAP-gamma. Interacts with STING1.

The protein resides in the endoplasmic reticulum membrane. Functionally, TRAP proteins are part of a complex whose function is to bind calcium to the ER membrane and thereby regulate the retention of ER resident proteins. This Homo sapiens (Human) protein is Translocon-associated protein subunit beta (SSR2).